Reading from the N-terminus, the 257-residue chain is Snake venom serine protease rhinocerase 4 (257 aa).

An N-terminal signal peptide occupies residues 1-17 (VLIRVLANLLVLQLSYA). Positions 18 to 23 (QKSSEL) are excised as a propeptide. Positions 24-248 (VIGGAECNIN…YTDWIRSIIG (225 aa)) constitute a Peptidase S1 domain. Intrachain disulfides connect Cys-30–Cys-162, Cys-49–Cys-65, Cys-97–Cys-255, Cys-141–Cys-209, Cys-173–Cys-188, and Cys-199–Cys-224. Asn-43 carries N-linked (GlcNAc...) asparagine glycosylation. The Charge relay system role is filled by His-64. 2 N-linked (GlcNAc...) asparagine glycosylation sites follow: Asn-78 and Asn-100. Asp-109 functions as the Charge relay system in the catalytic mechanism. Ser-203 acts as the Charge relay system in catalysis. The N-linked (GlcNAc...) asparagine glycan is linked to Asn-250.

It belongs to the peptidase S1 family. Snake venom subfamily. In terms of tissue distribution, expressed by the venom gland.

Its subcellular location is the secreted. In terms of biological role, snake venom serine protease that may act in the hemostasis system of the prey. This is Snake venom serine protease rhinocerase 4 from Bitis rhinoceros (West African gaboon viper).